The chain runs to 376 residues: UDP-N-acetylglucosamine--N-acetylmuramyl-(pentapeptide) pyrophosphoryl-undecaprenol N-acetylglucosamine transferase (376 aa).

UDP-N-acetyl-alpha-D-glucosamine is bound by residues 11 to 13 (TGG), Asn117, Arg160, Ser208, and Gln310.

This sequence belongs to the glycosyltransferase 28 family. MurG subfamily.

The protein resides in the cell inner membrane. It carries out the reaction di-trans,octa-cis-undecaprenyl diphospho-N-acetyl-alpha-D-muramoyl-L-alanyl-D-glutamyl-meso-2,6-diaminopimeloyl-D-alanyl-D-alanine + UDP-N-acetyl-alpha-D-glucosamine = di-trans,octa-cis-undecaprenyl diphospho-[N-acetyl-alpha-D-glucosaminyl-(1-&gt;4)]-N-acetyl-alpha-D-muramoyl-L-alanyl-D-glutamyl-meso-2,6-diaminopimeloyl-D-alanyl-D-alanine + UDP + H(+). It participates in cell wall biogenesis; peptidoglycan biosynthesis. Its function is as follows. Cell wall formation. Catalyzes the transfer of a GlcNAc subunit on undecaprenyl-pyrophosphoryl-MurNAc-pentapeptide (lipid intermediate I) to form undecaprenyl-pyrophosphoryl-MurNAc-(pentapeptide)GlcNAc (lipid intermediate II). This is UDP-N-acetylglucosamine--N-acetylmuramyl-(pentapeptide) pyrophosphoryl-undecaprenol N-acetylglucosamine transferase from Rickettsia africae (strain ESF-5).